Here is a 2042-residue protein sequence, read N- to C-terminus: Protein mini spindles (2042 aa).

TOG stretches follow at residues 1–229 (MAED…VEPS) and 267–505 (MDLL…KVAG). The segment at 1-505 (MAEDTEYKKL…KAEIKIKVAG (505 aa)) is binds tubulin. Promotes microtubule polymerization stretches follow at residues 1–516 (MAED…ASAP) and 581–1080 (TPEE…EKAR). HEAT repeat units lie at residues 120-157 (EKQE…EFGH), 160-197 (IGVK…WIGA), 270-311 (LDPV…DHPK), 315-353 (GEYG…GLAK), 357-394 (NYAS…STSL), 396-433 (AQQE…TALN), and 440-478 (LTTS…VTPL). Residues 498–821 (EIKIKVAGPK…PKPVRGVQRS (324 aa)) are association with microtubule lattice. The interval 506–572 (PKKETRPASA…PTAALKAGGK (67 aa)) is disordered. The span at 513 to 531 (ASAPTAKAAAPAKTVAGSV) shows a compositional bias: low complexity. A TOG 3 region spans residues 581-814 (TPEELQEKSE…KNVGEKPPKP (234 aa)). 4 HEAT repeats span residues 587–624 (EKSE…SGFD), 625–662 (AKQA…IIRS), 672–710 (TTVD…LEYV), and 745–782 (LQPK…YMGK). Positions 804–849 (DKNVGEKPPKPVRGVQRSSGGTAGNSPDNEDDDGGAAGEEEPINMA) are disordered. Positions 819-830 (QRSSGGTAGNSP) are enriched in polar residues. Residues 831–845 (DNEDDDGGAAGEEEP) are compositionally biased toward acidic residues. TOG regions lie at residues 849-1087 (ADLL…PVKP) and 1179-1415 (TELL…KPTP). HEAT repeat units lie at residues 856 to 893 (DIAP…EARL), 896 to 933 (PSIG…AMGA), 937 to 974 (NHVR…KGGY), and 1017 to 1054 (EDIH…HLGF). The segment at 1083–1140 (LPVKPLPKGKHQAPIPEEPKLKTVRGGGAGGAPGIQKSATARVAGGQDKQVPARKKDE) is disordered. The association with microtubule lattice stretch occupies residues 1099–1428 (EEPKLKTVRG…VDVPAPQRHD (330 aa)). HEAT repeat units follow at residues 1205 to 1242 (RYHL…RFYD), 1272 to 1309 (NEGS…VFPF), 1311 to 1344 (KVFG…SYGM), and 1346 to 1383 (ICPQ…LSGE). Disordered regions lie at residues 1407–1455 (AKKT…TFDQ) and 1940–1959 (NAGS…NGPD). Positions 1940 to 1957 (NAGSTQDNRTDVNYQNNG) are enriched in polar residues.

The protein belongs to the TOG/XMAP215 family. As to quaternary structure, interacts with tacc, dgt6. Interacts with mv. Interacts with Patronin.

The protein resides in the cytoplasm. It is found in the cytoskeleton. Its subcellular location is the microtubule organizing center. It localises to the centrosome. The protein localises to the spindle. The protein resides in the perinuclear region. In terms of biological role, binds to the plus end of microtubules and regulates microtubule dynamics and microtubule organization. Function in neurons is essential for adult survival, and is important for climbing behavior and activity. Promotes cytoplasmic microtubule nucleation and elongation. May act as a microtubule antipause factor that rapidly catalyzes the transition from pause to either growth or shrinkage. Involved in mitotic spindle elongation. Involved in the establishment of cell polarity and mitotic spindle orientation in neuroblasts. Required for maintaining the bipolarity of acentrosomal meiotic spindles; the function is dependent on tacc and involves ncd. Involved in oocyte microtubule cytoskeleton organization and bicoid mRNA localization. Seems to be involved in elongation of kinetochore-derived microtubule fibers. In fat body cells, essential component of perinuclear non-centrosomal microtubule-organizing centers (ncMTOCs) which function to accommodate the organization of microtubule (MT) networks to control nuclear positioning and dynein motor-based retrograde endosomal trafficking. Within the ncMTOCs, Msp300 and shot anchors the ncMTOC at the nuclear surface and recruits the MT minus-end regulators Patronin and Nin for assembly, anchoring and/or stabilization of circumferential and radial MTs at the ncMTOCs. Patronin, and perhaps Nin, then recruits msps to the ncMTOC where it is required for the gamma-tubulin-independent elongation and assembly of radial MTs. The chain is Protein mini spindles (msps) from Drosophila melanogaster (Fruit fly).